A 334-amino-acid polypeptide reads, in one-letter code: Replication factor C small subunit (334 aa).

49–56 contributes to the ATP binding site; that stretch reads GPPGVGKT.

This sequence belongs to the activator 1 small subunits family. RfcS subfamily. Heteromultimer composed of small subunits (RfcS) and large subunits (RfcL).

Its function is as follows. Part of the RFC clamp loader complex which loads the PCNA sliding clamp onto DNA. In Methanosarcina barkeri (strain Fusaro / DSM 804), this protein is Replication factor C small subunit.